A 488-amino-acid chain; its full sequence is Probable glycine dehydrogenase (decarboxylating) subunit 2 (488 aa).

K273 is subject to N6-(pyridoxal phosphate)lysine.

The protein belongs to the GcvP family. C-terminal subunit subfamily. The glycine cleavage system is composed of four proteins: P, T, L and H. In this organism, the P 'protein' is a heterodimer of two subunits. Pyridoxal 5'-phosphate serves as cofactor.

It catalyses the reaction N(6)-[(R)-lipoyl]-L-lysyl-[glycine-cleavage complex H protein] + glycine + H(+) = N(6)-[(R)-S(8)-aminomethyldihydrolipoyl]-L-lysyl-[glycine-cleavage complex H protein] + CO2. Its function is as follows. The glycine cleavage system catalyzes the degradation of glycine. The P protein binds the alpha-amino group of glycine through its pyridoxal phosphate cofactor; CO(2) is released and the remaining methylamine moiety is then transferred to the lipoamide cofactor of the H protein. The polypeptide is Probable glycine dehydrogenase (decarboxylating) subunit 2 (Halalkalibacterium halodurans (strain ATCC BAA-125 / DSM 18197 / FERM 7344 / JCM 9153 / C-125) (Bacillus halodurans)).